Consider the following 728-residue polypeptide: Pre-mRNA-splicing ATP-dependent RNA helicase prp-28 (728 aa).

The tract at residues 19–155 is disordered; the sequence is KKEEEAAAAK…NDEAELRARY (137 aa). Basic and acidic residues-rich tracts occupy residues 33–59, 109–125, and 137–153; these read PKKE…EEAK, RDYR…DRNQ, and EEKR…ELRA. Residues 293 to 321 carry the Q motif motif; that stretch reads RSWEESTLPRRLLDIVKNVGYDEPTPIQR. The Helicase ATP-binding domain occupies 324 to 527; it reads IPIALQARDL…KKYLRRPAIV (204 aa). 337 to 344 is an ATP binding site; the sequence is AVTGSGKT. The DEAD box motif lies at 450-453; that stretch reads DEAD. One can recognise a Helicase C-terminal domain in the interval 538-701; it reads TVEQRVEFVS…KVPDELRRHE (164 aa). The segment at 692–728 is disordered; sequence KVPDELRRHEAAQNKPQKGQKKLEESNGYSGKGGSWN. The span at 693–703 shows a compositional bias: basic and acidic residues; the sequence is VPDELRRHEAA.

Belongs to the DEAD box helicase family. DDX23/PRP28 subfamily. In terms of assembly, component of the U5 snRNP complex.

The protein localises to the cytoplasm. Its subcellular location is the nucleus. It catalyses the reaction ATP + H2O = ADP + phosphate + H(+). In terms of biological role, ATP-dependent RNA helicase involved in mRNA splicing. May destabilize the U1/5'-splice site duplex to permit an effective competition for the 5'-splice site by the U6 snRNA, resulting in the switch between U1 and U6 at the 5'-splice site. May also act to unwind the U4/U6 base-pairing interaction in the U4/U6/U5 snRNP, facilitating the first covalent step of splicing. The protein is Pre-mRNA-splicing ATP-dependent RNA helicase prp-28 (prp-28) of Neurospora crassa (strain ATCC 24698 / 74-OR23-1A / CBS 708.71 / DSM 1257 / FGSC 987).